Reading from the N-terminus, the 227-residue chain is PKHD-type hydroxylase Swit_4046 (227 aa).

The region spanning 78 to 178 (KVFPPLFNLY…RLCSFFWIQS (101 aa)) is the Fe2OG dioxygenase domain. H96, D98, and H159 together coordinate Fe cation. R169 contacts 2-oxoglutarate.

Fe(2+) serves as cofactor. Requires L-ascorbate as cofactor.

This is PKHD-type hydroxylase Swit_4046 from Rhizorhabdus wittichii (strain DSM 6014 / CCUG 31198 / JCM 15750 / NBRC 105917 / EY 4224 / RW1) (Sphingomonas wittichii).